The chain runs to 253 residues: Ribosomal RNA small subunit methyltransferase J (253 aa).

Residues 123–124 and Asp-176 each bind S-adenosyl-L-methionine; that span reads ER.

It belongs to the methyltransferase superfamily. RsmJ family.

It is found in the cytoplasm. The enzyme catalyses guanosine(1516) in 16S rRNA + S-adenosyl-L-methionine = N(2)-methylguanosine(1516) in 16S rRNA + S-adenosyl-L-homocysteine + H(+). Functionally, specifically methylates the guanosine in position 1516 of 16S rRNA. The sequence is that of Ribosomal RNA small subunit methyltransferase J from Magnetococcus marinus (strain ATCC BAA-1437 / JCM 17883 / MC-1).